Consider the following 428-residue polypeptide: Cell division protein DamX (428 aa).

The interval 1–99 (MDEFKPEDEL…KRKKAASKPA (99 aa)) is disordered. The Cytoplasmic portion of the chain corresponds to 1–103 (MDEFKPEDEL…AASKPASRQY (103 aa)). Composition is skewed to basic and acidic residues over residues 7 to 36 (EDELKPDPSDRRTGRSRQSSERSERTERGE) and 50 to 64 (DDRRPTRAQKERNEE). Positions 55–87 (TRAQKERNEEPEIEEEIDESEDETVDEERVERR) form a coiled coil. The segment covering 65-82 (PEIEEEIDESEDETVDEE) has biased composition (acidic residues). Residues 86–95 (RRPRKRKKAA) are compositionally biased toward basic residues. Residues 104–124 (MMMGVGILVLLLLIIGIGSAL) traverse the membrane as a helical segment. Residues 125-428 (KAPSTTSSDQ…PLRQVQADLK (304 aa)) lie on the Periplasmic side of the membrane. 2 disordered regions span residues 149-190 (TDQA…VATD) and 226-344 (EPAT…KSAP). Residues 236–257 (GNASRDTAKTQTAERPSTTRPA) are compositionally biased toward polar residues. Low complexity predominate over residues 288 to 334 (PAAPVASTKAPAATSTPAPKETATTAPVQTASPAQTTATPAAGAKTA). An SPOR domain is found at 342–419 (SAPSSHYTLQ…VQAKNPWAKP (78 aa)).

The protein belongs to the DamX family. Interacts in vitro with multiple Fts proteins, including FtsQ and FtsN.

The protein localises to the cell inner membrane. Non-essential cell division protein. The polypeptide is Cell division protein DamX (Escherichia coli (strain K12)).